A 186-amino-acid chain; its full sequence is MNDSGVSKTYASALLGATNVPEEVEQELGDLAQLLFKDEKVKNFFLSPTVSNEEKEKVLIKNLRGKISDITLNFLGVLLNRGRIIHLPEIQKQFTVELDKKKGRVRAQVRSYPSLEPAQAAKLGSILSEKFKSEFILEVSEDKSLLGGFVVQFNDLKIEKSIASQLGEIKKSMLEKKLPVGAIYEN.

The protein belongs to the ATPase delta chain family. As to quaternary structure, F-type ATPases have 2 components, F(1) - the catalytic core - and F(0) - the membrane proton channel. F(1) has five subunits: alpha(3), beta(3), gamma(1), delta(1), epsilon(1). F(0) has three main subunits: a(1), b(2) and c(10-14). The alpha and beta chains form an alternating ring which encloses part of the gamma chain. F(1) is attached to F(0) by a central stalk formed by the gamma and epsilon chains, while a peripheral stalk is formed by the delta and b chains.

Its subcellular location is the cell inner membrane. In terms of biological role, f(1)F(0) ATP synthase produces ATP from ADP in the presence of a proton or sodium gradient. F-type ATPases consist of two structural domains, F(1) containing the extramembraneous catalytic core and F(0) containing the membrane proton channel, linked together by a central stalk and a peripheral stalk. During catalysis, ATP synthesis in the catalytic domain of F(1) is coupled via a rotary mechanism of the central stalk subunits to proton translocation. Its function is as follows. This protein is part of the stalk that links CF(0) to CF(1). It either transmits conformational changes from CF(0) to CF(1) or is implicated in proton conduction. The sequence is that of ATP synthase subunit delta from Leptospira interrogans serogroup Icterohaemorrhagiae serovar copenhageni (strain Fiocruz L1-130).